The sequence spans 336 residues: Aspartate carbamoyltransferase catalytic subunit (336 aa).

Carbamoyl phosphate is bound by residues R72 and T73. K100 lines the L-aspartate pocket. 3 residues coordinate carbamoyl phosphate: R122, H152, and Q155. 2 residues coordinate L-aspartate: R185 and R240. The carbamoyl phosphate site is built by G281 and P282.

The protein belongs to the aspartate/ornithine carbamoyltransferase superfamily. ATCase family. Heterododecamer (2C3:3R2) of six catalytic PyrB chains organized as two trimers (C3), and six regulatory PyrI chains organized as three dimers (R2).

The catalysed reaction is carbamoyl phosphate + L-aspartate = N-carbamoyl-L-aspartate + phosphate + H(+). Its pathway is pyrimidine metabolism; UMP biosynthesis via de novo pathway; (S)-dihydroorotate from bicarbonate: step 2/3. Catalyzes the condensation of carbamoyl phosphate and aspartate to form carbamoyl aspartate and inorganic phosphate, the committed step in the de novo pyrimidine nucleotide biosynthesis pathway. This Marinobacter nauticus (strain ATCC 700491 / DSM 11845 / VT8) (Marinobacter aquaeolei) protein is Aspartate carbamoyltransferase catalytic subunit.